The chain runs to 133 residues: Ribonuclease P protein component (133 aa).

The protein belongs to the RnpA family. Consists of a catalytic RNA component (M1 or rnpB) and a protein subunit.

It catalyses the reaction Endonucleolytic cleavage of RNA, removing 5'-extranucleotides from tRNA precursor.. In terms of biological role, RNaseP catalyzes the removal of the 5'-leader sequence from pre-tRNA to produce the mature 5'-terminus. It can also cleave other RNA substrates such as 4.5S RNA. The protein component plays an auxiliary but essential role in vivo by binding to the 5'-leader sequence and broadening the substrate specificity of the ribozyme. This Paramagnetospirillum magneticum (strain ATCC 700264 / AMB-1) (Magnetospirillum magneticum) protein is Ribonuclease P protein component.